Here is a 114-residue protein sequence, read N- to C-terminus: Replication initiation control protein YabA (114 aa).

His84, Cys86, Cys102, and Cys105 together coordinate Zn(2+).

This sequence belongs to the YabA family. As to quaternary structure, homotetramer. Interacts with both DnaA and DnaN, acting as a bridge between these two proteins. The cofactor is Zn(2+).

It is found in the cytoplasm. The protein resides in the nucleoid. Involved in control of chromosome replication initiation. Inhibits the cooperative binding of DnaA to the oriC region, thus negatively regulating initiation of chromosome replication. Inhibits the ability of DnaA-ATP to form a helix on DNA; does not disassemble preformed DnaA-DNA helices. Decreases the residence time of DnaA on the chromosome at its binding sites (oriC, replication forks and promoter-binding sites). Tethers DnaA to the replication machinery via the DNA polymerase beta sliding clamp subunit (dnaN). Associates with oriC and other DnaA targets on the chromosome in a DnaA-dependent manner. This is Replication initiation control protein YabA from Ligilactobacillus salivarius (strain UCC118) (Lactobacillus salivarius).